A 413-amino-acid chain; its full sequence is Hemolin (413 aa).

The first 18 residues, 1-18 (MASKSLVVLSACIIIGSA), serve as a signal peptide directing secretion. Ig-like C2-type domains lie at 25 to 112 (PVLK…RVIS), 122 to 211 (PAKT…GEVR), 233 to 322 (PQYL…LKVT), and 327 to 413 (PKYV…VQVN). Intrachain disulfides connect Cys-46/Cys-97, Cys-140/Cys-199, Cys-252/Cys-305, and Cys-349/Cys-395. Residue Asn-283 is glycosylated (N-linked (GlcNAc...) asparagine).

It belongs to the hemolin family. In terms of tissue distribution, expressed in larval bristles.

It localises to the secreted. Increased activity in presence of phospholipids (low concentrations) and calcium ions. Inhibited by PMSF. Not affected by EDTA and E-64. In terms of biological role, bristle toxin involved in caterpillar defense by participating in hemorrhagic syndrome characterized by a consumptive coagulopathy. Exhibits procoagulant activity through selective factor X proteolytic activation. Activates factor X in a dose- and time-dependent manner but does not activate gamma-carboxyglutamic acid domainless factor X. Its activity does not depend on calcium ions. Also functions as a growth stimulator and an inhibitor of cellular death for endothelial cells. In vitro, increases proliferation of human umbilical vein endothelial cells (HUVEC) and inhibits the apoptosis induced by starvation. Also increases slightly the complement decay-accelerating factor (CD55), which protects cells from complement-mediated lysis. On the other hand, does not alter the release or expression of von Willebrand factor (VWF), tissue factor (F3), intercellular adhesion molecule-1 (ICAM1), interleukin-8 (CXCL8), and prostacyclin. Does not show fibrinolytic or fibrinogenolytic activities. The chain is Hemolin from Lonomia obliqua (Moth).